The chain runs to 339 residues: NADH-quinone oxidoreductase subunit H (339 aa).

A run of 9 helical transmembrane segments spans residues isoleucine 9–cysteine 29, proline 50–phenylalanine 70, isoleucine 82–isoleucine 102, valine 115–glycine 135, methionine 161–isoleucine 181, methionine 187–leucine 207, methionine 235–threonine 255, isoleucine 275–isoleucine 295, and glycine 311–valine 331.

Belongs to the complex I subunit 1 family. As to quaternary structure, NDH-1 is composed of 14 different subunits. Subunits NuoA, H, J, K, L, M, N constitute the membrane sector of the complex.

It is found in the cell inner membrane. It carries out the reaction a quinone + NADH + 5 H(+)(in) = a quinol + NAD(+) + 4 H(+)(out). Functionally, NDH-1 shuttles electrons from NADH, via FMN and iron-sulfur (Fe-S) centers, to quinones in the respiratory chain. The immediate electron acceptor for the enzyme in this species is believed to be ubiquinone. Couples the redox reaction to proton translocation (for every two electrons transferred, four hydrogen ions are translocated across the cytoplasmic membrane), and thus conserves the redox energy in a proton gradient. This subunit may bind ubiquinone. In Rickettsia felis (strain ATCC VR-1525 / URRWXCal2) (Rickettsia azadi), this protein is NADH-quinone oxidoreductase subunit H.